Consider the following 274-residue polypeptide: MKKTQTWIITCIYLQLLLFNPLVHSQGICRNRVTDDVKDVTKLVANLPKDYMITLKYVPGMDVLPSHCWISEMVEQLSVSLTDLLDKFSNISEGLSNYSIIDKLVKIVDDLVECMEEHSFENVKKSSKSPEPRQFTPEKFFGIFNKSIDAFKDLEIVASTMSECVISSTSSPEKDSRVSVTKPFMLPPVAASSLRNDSSSSNRKASNSIEDSSLQWAAVALPAFFSLVIGFAFGALYWKKKQPNLTRTVENRQINEEDNEISMLQEKEREFQEV.

Residues 1-25 (MKKTQTWIITCIYLQLLLFNPLVHS) form the signal peptide. Glutamine 26 is modified (pyrrolidone carboxylic acid). The Extracellular portion of the chain corresponds to 26–215 (QGICRNRVTD…SNSIEDSSLQ (190 aa)). Intrachain disulfides connect cysteine 29/cysteine 114 and cysteine 68/cysteine 164. N-linked (GlcNAc...) asparagine glycosylation is found at asparagine 90, asparagine 97, asparagine 145, and asparagine 196. The helical transmembrane segment at 216-238 (WAAVALPAFFSLVIGFAFGALYW) threads the bilayer. At 239-274 (KKKQPNLTRTVENRQINEEDNEISMLQEKEREFQEV) the chain is on the cytoplasmic side.

It belongs to the SCF family. In terms of assembly, homodimer, non-covalently linked. In terms of processing, a soluble form is produced by proteolytic processing of the extracellular domain.

It localises to the cytoplasm. The protein localises to the cytoskeleton. It is found in the cell membrane. Its subcellular location is the cell projection. The protein resides in the lamellipodium. It localises to the filopodium. The protein localises to the secreted. Stimulates the proliferation of mast cells. Able to augment the proliferation of both myeloid and lymphoid hematopoietic progenitors in bone marrow culture. Also mediates cell-cell adhesion. Acts synergistically with other cytokines, probably interleukins. The chain is Kit ligand (KITLG) from Capra hircus (Goat).